The primary structure comprises 255 residues: MWIGIISLFPEMFRAITDYGVTGRAVKNGLLSIQSWSPRDFTHDRHRTVDDRPYGGGPGMLMMVQPLRDAIHAAKAAAGEGAKVIYLSPQGRKLDQAGVSELATNQKLILVCGRYEGIDERVIQTEIDEEWSIGDYVLSGGELPAMTLIDSVSRFIPGVLGHEASATEDSFAEGLLDCPHYTRPEVLEGMEVPPVLLSGNHAEIRRWRLKQSLGRTWLRRPKLLENLALTEEQARLLAEFKTEHAQQQHKHDGMA.

Residues glycine 113 and 133–138 (IGDYVL) each bind S-adenosyl-L-methionine.

The protein belongs to the RNA methyltransferase TrmD family. Homodimer.

The protein localises to the cytoplasm. The enzyme catalyses guanosine(37) in tRNA + S-adenosyl-L-methionine = N(1)-methylguanosine(37) in tRNA + S-adenosyl-L-homocysteine + H(+). In terms of biological role, specifically methylates guanosine-37 in various tRNAs. This Shigella flexneri serotype 5b (strain 8401) protein is tRNA (guanine-N(1)-)-methyltransferase.